The primary structure comprises 290 residues: Ribosomal RNA small subunit methyltransferase A (290 aa).

Asn27, Leu29, Gly54, Glu75, Asp100, and Asn125 together coordinate S-adenosyl-L-methionine.

The protein belongs to the class I-like SAM-binding methyltransferase superfamily. rRNA adenine N(6)-methyltransferase family. RsmA subfamily.

Its subcellular location is the cytoplasm. The enzyme catalyses adenosine(1518)/adenosine(1519) in 16S rRNA + 4 S-adenosyl-L-methionine = N(6)-dimethyladenosine(1518)/N(6)-dimethyladenosine(1519) in 16S rRNA + 4 S-adenosyl-L-homocysteine + 4 H(+). Functionally, specifically dimethylates two adjacent adenosines (A1518 and A1519) in the loop of a conserved hairpin near the 3'-end of 16S rRNA in the 30S particle. May play a critical role in biogenesis of 30S subunits. The sequence is that of Ribosomal RNA small subunit methyltransferase A from Streptococcus pneumoniae (strain P1031).